We begin with the raw amino-acid sequence, 337 residues long: Ketol-acid reductoisomerase (NADP(+)) (337 aa).

The region spanning 3–183 (VEMFYDDDAD…GGARAGVIKT (181 aa)) is the KARI N-terminal Rossmann domain. NADP(+)-binding positions include 26-29 (YGSQ), Lys49, Ser52, Ser54, and 84-87 (DTAQ). Residue His109 is part of the active site. Gly135 lines the NADP(+) pocket. One can recognise a KARI C-terminal knotted domain in the interval 184–329 (TFKEETETDL…KKLRDLMSWV (146 aa)). Positions 192, 196, 228, and 232 each coordinate Mg(2+). Residue Ser253 participates in substrate binding.

Belongs to the ketol-acid reductoisomerase family. It depends on Mg(2+) as a cofactor.

The catalysed reaction is (2R)-2,3-dihydroxy-3-methylbutanoate + NADP(+) = (2S)-2-acetolactate + NADPH + H(+). The enzyme catalyses (2R,3R)-2,3-dihydroxy-3-methylpentanoate + NADP(+) = (S)-2-ethyl-2-hydroxy-3-oxobutanoate + NADPH + H(+). It participates in amino-acid biosynthesis; L-isoleucine biosynthesis; L-isoleucine from 2-oxobutanoate: step 2/4. It functions in the pathway amino-acid biosynthesis; L-valine biosynthesis; L-valine from pyruvate: step 2/4. Functionally, involved in the biosynthesis of branched-chain amino acids (BCAA). Catalyzes an alkyl-migration followed by a ketol-acid reduction of (S)-2-acetolactate (S2AL) to yield (R)-2,3-dihydroxy-isovalerate. In the isomerase reaction, S2AL is rearranged via a Mg-dependent methyl migration to produce 3-hydroxy-3-methyl-2-ketobutyrate (HMKB). In the reductase reaction, this 2-ketoacid undergoes a metal-dependent reduction by NADPH to yield (R)-2,3-dihydroxy-isovalerate. In Rhodococcus opacus (strain B4), this protein is Ketol-acid reductoisomerase (NADP(+)).